We begin with the raw amino-acid sequence, 892 residues long: Formin-like protein 8 (892 aa).

A signal peptide spans 1-23 (MPPAIARFVAIAAVLLCGHVAVA). The disordered stretch occupies residues 43–119 (FPIEWTPPPS…SGSGSGHHGG (77 aa)). Over residues 47–59 (WTPPPSPPPPPAP) the composition is skewed to pro residues. The segment covering 87 to 111 (TTPTSPGTTPSPTTVAADVSKTPSG) has biased composition (low complexity). The chain crosses the membrane as a helical span at residues 126-146 (IVAAGAGAAAAVALLGFACAF). Residues 188–457 (PTTPARHHGP…GSGEPRPKLK (270 aa)) are disordered. A compositionally biased stretch (basic and acidic residues) spans 210 to 230 (LRSERARRGVSRDEDADHPSP). 3 stretches are compositionally biased toward low complexity: residues 268-286 (AEAWSSASASSPPTTTTAS), 297-306 (FFPPVAAIAA), and 321-330 (RTRFSTGSTP). A compositionally biased stretch (pro residues) spans 339 to 383 (SPRPVQPSNAPPPPPPPPPPPPPPPPPKLNTAPKPPPPPPPPPSV). Residues 424 to 436 (AATTVDNNGSTSM) are compositionally biased toward polar residues. The FH2 domain maps to 446–867 (DGGSGEPRPK…GSARSFRISA (422 aa)).

This sequence belongs to the formin-like family. Class-I subfamily.

Its subcellular location is the membrane. In Oryza sativa subsp. japonica (Rice), this protein is Formin-like protein 8 (FH8).